A 184-amino-acid polypeptide reads, in one-letter code: Dual-action ribosomal maturation protein DarP (184 aa).

Residues 1-21 (MYKHPDEEWLDEIPGQQENED) form a disordered region.

It belongs to the DarP family.

The protein localises to the cytoplasm. Its function is as follows. Member of a network of 50S ribosomal subunit biogenesis factors which assembles along the 30S-50S interface, preventing incorrect 23S rRNA structures from forming. Promotes peptidyl transferase center (PTC) maturation. The chain is Dual-action ribosomal maturation protein DarP from Edwardsiella ictaluri (strain 93-146).